The primary structure comprises 158 residues: NAD(P)H-quinone oxidoreductase subunit N (158 aa).

This sequence belongs to the complex I NdhN subunit family. As to quaternary structure, NDH-1 can be composed of about 15 different subunits; different subcomplexes with different compositions have been identified which probably have different functions.

Its subcellular location is the cellular thylakoid membrane. The catalysed reaction is a plastoquinone + NADH + (n+1) H(+)(in) = a plastoquinol + NAD(+) + n H(+)(out). It catalyses the reaction a plastoquinone + NADPH + (n+1) H(+)(in) = a plastoquinol + NADP(+) + n H(+)(out). In terms of biological role, NDH-1 shuttles electrons from an unknown electron donor, via FMN and iron-sulfur (Fe-S) centers, to quinones in the respiratory and/or the photosynthetic chain. The immediate electron acceptor for the enzyme in this species is believed to be plastoquinone. Couples the redox reaction to proton translocation, and thus conserves the redox energy in a proton gradient. Cyanobacterial NDH-1 also plays a role in inorganic carbon-concentration. The sequence is that of NAD(P)H-quinone oxidoreductase subunit N from Prochlorococcus marinus (strain MIT 9301).